A 549-amino-acid polypeptide reads, in one-letter code: Oxygen-dependent choline dehydrogenase (549 aa).

4–33 (DFVIIGSGSAGSAMAYRLSEDGRYSVIVIE) lines the FAD pocket. The Proton acceptor role is filled by histidine 465.

Belongs to the GMC oxidoreductase family. FAD serves as cofactor.

It catalyses the reaction choline + A = betaine aldehyde + AH2. It carries out the reaction betaine aldehyde + NAD(+) + H2O = glycine betaine + NADH + 2 H(+). It participates in amine and polyamine biosynthesis; betaine biosynthesis via choline pathway; betaine aldehyde from choline (cytochrome c reductase route): step 1/1. Functionally, involved in the biosynthesis of the osmoprotectant glycine betaine. Catalyzes the oxidation of choline to betaine aldehyde and betaine aldehyde to glycine betaine at the same rate. In Brucella canis (strain ATCC 23365 / NCTC 10854 / RM-666), this protein is Oxygen-dependent choline dehydrogenase.